Reading from the N-terminus, the 187-residue chain is Holliday junction branch migration complex subunit RuvA (187 aa).

The segment at 1–64 (MIEYVRGIIE…EDGFQIFGFK (64 aa)) is domain I. Residues 65-136 (TKEELDLFEK…ELKDKLPKEI (72 aa)) form a domain II region. Residues 136–139 (IVFE) are flexible linker. Residues 140–187 (GDNNFSNEALEALLALGYTKSEAIYALADITCDSVEDAVKQALKKLMK) form a domain III region.

Belongs to the RuvA family. In terms of assembly, homotetramer. Forms an RuvA(8)-RuvB(12)-Holliday junction (HJ) complex. HJ DNA is sandwiched between 2 RuvA tetramers; dsDNA enters through RuvA and exits via RuvB. An RuvB hexamer assembles on each DNA strand where it exits the tetramer. Each RuvB hexamer is contacted by two RuvA subunits (via domain III) on 2 adjacent RuvB subunits; this complex drives branch migration. In the full resolvosome a probable DNA-RuvA(4)-RuvB(12)-RuvC(2) complex forms which resolves the HJ.

The protein resides in the cytoplasm. The RuvA-RuvB-RuvC complex processes Holliday junction (HJ) DNA during genetic recombination and DNA repair, while the RuvA-RuvB complex plays an important role in the rescue of blocked DNA replication forks via replication fork reversal (RFR). RuvA specifically binds to HJ cruciform DNA, conferring on it an open structure. The RuvB hexamer acts as an ATP-dependent pump, pulling dsDNA into and through the RuvAB complex. HJ branch migration allows RuvC to scan DNA until it finds its consensus sequence, where it cleaves and resolves the cruciform DNA. In Thermoanaerobacter pseudethanolicus (strain ATCC 33223 / 39E) (Clostridium thermohydrosulfuricum), this protein is Holliday junction branch migration complex subunit RuvA.